The primary structure comprises 362 residues: MTVTNKPVKPANVPVMDFEAIHASVGNERKKYLRQLDEAWSHHGAIYVINHSIGTRTLEEAFAWCKKFFDLPLAVKNSVHIPPDVSKHFQGWTGTGEAISSQGVWDPDEIERLRKETPTELKEAMELQDPCGTYPPGAPDLNLVEQHLPGFLDFLKKWFAACYKQSLQNMRLVCEILGMEDLDYIGKKFEPRHMSTHSTWNYFLGQPVSQLASGSANRLNAHTDYCQFTMLFQDMVGGLELHDYEEDIYRPVPPIKGAMIVQVGDLLEKQTNGRWRSALHRVTAPSRYMYEGSAGDDDELVQRYSLVFFGHLNLDEMIEPLPGCEKQGKWSTLEWKDRMTAGQWLARRVALEYERKTAATVM.

The Fe2OG dioxygenase domain maps to 199–312; the sequence is TWNYFLGQPV…RYSLVFFGHL (114 aa). Residues His222, Asp224, and His280 each contribute to the Fe cation site. Arg303 is a 2-oxoglutarate binding site.

This sequence belongs to the iron/ascorbate-dependent oxidoreductase family. It depends on Fe(2+) as a cofactor.

Its pathway is alkaloid biosynthesis. Its function is as follows. 2-oxoglutarate-dependent dioxygenase; part of the gene cluster that mediates the biosynthesis of loline alkaloids, potent insecticidal agents composed of a pyrrolizidine ring system and an uncommon ether bridge linking carbons 2 and 7. Lolines are structurally differentiated by the various modifications of the L-amino group and include norloline, loline, N-methylloline, N-acetylloline, N-acetylnorloline, and N-formylloline. The first committed step is the condensation of O-acetyl-L-homoserine (derived from L-aspartic acid) and L-proline, probably catalyzed by the gamma-type pyridoxal 5'-phosphate(PLP)-dependent enzyme lolC, to give the diamino diacid, NACPP. Ensuing cyclization, decarboxylation, and acetylation steps yield 1-exo-acetamidopyrrolizidine (AcAP). LolO is required for installation of the ether bridge upon the pathway intermediate, 1-exo-acetamidopyrrolizidine (AcAP). In sequential 2-oxoglutarate- and O(2)-consuming steps, lolO removes hydrogens from C2 and C7 of AcAP to form both carbon-oxygen bonds in N-acetylnorloline (NANL), the precursor to all other lolines. The enzymes lolD, lolE, lolF and lolT have also been proposed to be involved in the ether-bridge installation. Further processing of the exocyclic moiety of NANL by fungal N-acetamidase (LolN), methyltransferase (LolM), and cytochrome P450 (LolP) enzymes, with occasional involvement of a plant acetyltransferase, generates the other known lolines. LolN transforms NANL to norlonine which is monomethylated and dimethylated to respectively lonine and N-methyllonine (NML) by lolM. LolP catalyzes hydroxylation of the methyl group in N-methylloline (NML) and further oxygenation to N-formylloline (NFL). A plant acetyltransferase is responsible for the acetylation of loline to form N-acetylloline (NAL). LolA might interact with aspartate kinase to prevent feedback inhibition of its activity by these end products and thereby promote production of l-homoserine from l-aspartate. In Epichloe uncinata (Endophyte fungus), this protein is 2-oxoglutarate-dependent dioxygenase lolO1.